Reading from the N-terminus, the 215-residue chain is Ribosomal RNA small subunit methyltransferase G (215 aa).

S-adenosyl-L-methionine is bound by residues Gly-73, Leu-78, 125–126, and Arg-140; that span reads AE.

It belongs to the methyltransferase superfamily. RNA methyltransferase RsmG family.

The protein localises to the cytoplasm. Functionally, specifically methylates the N7 position of guanine in position 518 of 16S rRNA. The protein is Ribosomal RNA small subunit methyltransferase G of Renibacterium salmoninarum (strain ATCC 33209 / DSM 20767 / JCM 11484 / NBRC 15589 / NCIMB 2235).